Reading from the N-terminus, the 211-residue chain is Pyridoxine/pyridoxamine 5'-phosphate oxidase (211 aa).

Substrate-binding positions include 7–10 (RRDY) and Lys-65. FMN contacts are provided by residues 60–65 (RIVLLK), 75–76 (YT), Arg-81, Lys-82, and Gln-104. Substrate is bound by residues Tyr-122, Arg-126, and Ser-130. FMN-binding positions include 139–140 (QS) and Trp-184. Residue 190–192 (RLH) participates in substrate binding. Arg-194 is an FMN binding site.

The protein belongs to the pyridoxamine 5'-phosphate oxidase family. As to quaternary structure, homodimer. Requires FMN as cofactor.

The catalysed reaction is pyridoxamine 5'-phosphate + O2 + H2O = pyridoxal 5'-phosphate + H2O2 + NH4(+). The enzyme catalyses pyridoxine 5'-phosphate + O2 = pyridoxal 5'-phosphate + H2O2. Its pathway is cofactor metabolism; pyridoxal 5'-phosphate salvage; pyridoxal 5'-phosphate from pyridoxamine 5'-phosphate: step 1/1. The protein operates within cofactor metabolism; pyridoxal 5'-phosphate salvage; pyridoxal 5'-phosphate from pyridoxine 5'-phosphate: step 1/1. Catalyzes the oxidation of either pyridoxine 5'-phosphate (PNP) or pyridoxamine 5'-phosphate (PMP) into pyridoxal 5'-phosphate (PLP). This is Pyridoxine/pyridoxamine 5'-phosphate oxidase from Aliivibrio salmonicida (strain LFI1238) (Vibrio salmonicida (strain LFI1238)).